Reading from the N-terminus, the 158-residue chain is Protein shisa-like-2B (158 aa).

Residues 65 to 85 traverse the membrane as a helical segment; the sequence is IGALVGLGIAALVLLAFVISV.

The protein belongs to the shisa family.

The protein resides in the membrane. The sequence is that of Protein shisa-like-2B (Shisal2b) from Mus musculus (Mouse).